The chain runs to 467 residues: Chlorophenol O-methyltransferase (467 aa).

A disordered region spans residues 1–41 (MAELRAPSSLSTERNGSASNTDVDKQKLNHLYQNGNKKTGS). Composition is skewed to polar residues over residues 8–21 (SSLS…ASNT) and 31–41 (LYQNGNKKTGS). D320 provides a ligand contact to S-adenosyl-L-methionine. H368 (proton acceptor) is an active-site residue.

It belongs to the class I-like SAM-binding methyltransferase superfamily. Cation-independent O-methyltransferase family.

The catalysed reaction is 2,4,6-trichlorophenol + S-adenosyl-L-methionine = 2,4,6-trichloroanisole + S-adenosyl-L-homocysteine. With respect to regulation, S-adenosyl-L-homocysteine acts as a competitive inhibitor. Also strongly inhibited by low concentrations of several metal ions, such as Cu(2+), Hg(2+), Zn(2+), and Ag(+), and to a lesser extent by p-chloromercuribenzoic acid, but it is not significantly affected by several thiols or other thiol reagents. Chlorophenol O-methyltransferase that methylates chlorophenols into chloroanisoles which are thought to be responsible for cork taint of wines. The only single chlorophenol (CP) methylated is 2-CP; neither 3-CP nor 4-CP are effective substrates. Within the dichlorophenols (DCPs), 2,4-DCP supports the highest rate of O-methylation, and the activity decreases in the following order: 2,3-DCP, 2,5-DCP, 2,6-DCP, and 3,4-DCP. Within the trichlorophenol (TCP) group, the maximal activity is observed with 2,3,4-TCP, whereas there is increasingly reduced activity with 2,4,5-TCP, 2,4,6-TCP, and 2,3,6-TCP. The only tetrachlorophenol (TeCP) that is methylated is 2,3,4,5-TeCP, since no activity can be detected with 2,3,4,6-TeCP and 2,3,5,6-TeCP. Is also able to methylate other halogenated phenols containing fluoro or bromo substituents, whereas other hydroxylated compounds, such as hydroxylated benzoic acids, hydroxybenzaldehydes, phenol, 2-metoxyphenol, and dihydroxybenzene, were not methylated. The protein is Chlorophenol O-methyltransferase of Trichoderma longibrachiatum.